A 433-amino-acid chain; its full sequence is Pyrimidine-nucleoside phosphorylase (433 aa).

81 to 83 (KHS) contributes to the phosphate binding site. K(+)-binding residues include glycine 88 and threonine 90. Residues threonine 92, 108-110 (KMS), and threonine 120 contribute to the phosphate site. Substrate contacts are provided by arginine 168 and lysine 187. K(+) is bound by residues leucine 243, alanine 246, and glutamate 255.

It belongs to the thymidine/pyrimidine-nucleoside phosphorylase family. In terms of assembly, homodimer. K(+) is required as a cofactor.

The enzyme catalyses uridine + phosphate = alpha-D-ribose 1-phosphate + uracil. The catalysed reaction is thymidine + phosphate = 2-deoxy-alpha-D-ribose 1-phosphate + thymine. It carries out the reaction 2'-deoxyuridine + phosphate = 2-deoxy-alpha-D-ribose 1-phosphate + uracil. Functionally, catalyzes phosphorolysis of the pyrimidine nucleosides uridine, thymidine and 2'-deoxyuridine with the formation of the corresponding pyrimidine base and ribose-1-phosphate. This Staphylococcus epidermidis (strain ATCC 35984 / DSM 28319 / BCRC 17069 / CCUG 31568 / BM 3577 / RP62A) protein is Pyrimidine-nucleoside phosphorylase (pdp).